Reading from the N-terminus, the 96-residue chain is Protein Vpr (96 aa).

The segment at 1 to 42 (MEQPPEDQGPQREPYNEWTLELLEELKHEAVRHFPREWLHGL) is homooligomerization. A phosphoserine; by host mark is found at Ser-79 and Ser-96.

Belongs to the HIV-1 VPR protein family. Homooligomer, may form homodimer. Interacts with p6-gag region of the Pr55 Gag precursor protein through a (Leu-X-X)4 motif near the C-terminus of the P6gag protein. Interacts with host UNG. May interact with host RAD23A/HHR23A. Interacts with host VPRBP/DCAF1, leading to hijack the CUL4A-RBX1-DDB1-DCAF1/VPRBP complex, mediating ubiquitination of host proteins such as TERT and ZGPAT and arrest of the cell cycle in G2 phase. Phosphorylated on several residues by host. These phosphorylations regulate VPR activity for the nuclear import of the HIV-1 pre-integration complex.

Its subcellular location is the virion. The protein localises to the host nucleus. It is found in the host extracellular space. Its function is as follows. During virus replication, may deplete host UNG protein, and incude G2-M cell cycle arrest. Acts by targeting specific host proteins for degradation by the 26S proteasome, through association with the cellular CUL4A-DDB1 E3 ligase complex by direct interaction with host VPRPB/DCAF-1. Cell cycle arrest reportedly occurs within hours of infection and is not blocked by antiviral agents, suggesting that it is initiated by the VPR carried into the virion. Additionally, VPR induces apoptosis in a cell cycle dependent manner suggesting that these two effects are mechanistically linked. Detected in the serum and cerebrospinal fluid of AIDS patient, VPR may also induce cell death to bystander cells. Functionally, during virus entry, plays a role in the transport of the viral pre-integration (PIC) complex to the host nucleus. This function is crucial for viral infection of non-dividing macrophages. May act directly at the nuclear pore complex, by binding nucleoporins phenylalanine-glycine (FG)-repeat regions. In Homo sapiens (Human), this protein is Protein Vpr.